The sequence spans 106 residues: uncharacterized protein (106 aa).

A disordered region spans residues 38 to 106; it reads KGNKKSKAAT…STHLPYHGSY (69 aa). 2 stretches are compositionally biased toward basic and acidic residues: residues 57-71 and 82-96; these read TRQE…HRPE and WKKE…KETS.

It localises to the mitochondrion. This is an uncharacterized protein from Arabidopsis thaliana (Mouse-ear cress).